Consider the following 126-residue polypeptide: Fluoride-specific ion channel FluC (126 aa).

Transmembrane regions (helical) follow at residues 7-24 (LWVSLGGIVGACARYFLS), 35-55 (FPWGTLLINITGSFVLGLFLV), 69-89 (LLIAIGFCGAYTTFSSYAYES), and 98-118 (WGLFAGNVLANNILCLAAVLG). G77 and T80 together coordinate Na(+).

The protein belongs to the fluoride channel Fluc/FEX (TC 1.A.43) family.

The protein localises to the cell inner membrane. The catalysed reaction is fluoride(in) = fluoride(out). Na(+) is not transported, but it plays an essential structural role and its presence is essential for fluoride channel function. Fluoride-specific ion channel. Important for reducing fluoride concentration in the cell, thus reducing its toxicity. The chain is Fluoride-specific ion channel FluC from Koribacter versatilis (strain Ellin345).